Consider the following 334-residue polypeptide: Putative lysine N-acyltransferase C17G9.06c (334 aa).

His-248 provides a ligand contact to substrate. Glu-286 serves as the catalytic Proton acceptor.

Belongs to the lysine N-acyltransferase mbtK family.

It is found in the cytoplasm. Its subcellular location is the nucleus. In Schizosaccharomyces pombe (strain 972 / ATCC 24843) (Fission yeast), this protein is Putative lysine N-acyltransferase C17G9.06c.